Reading from the N-terminus, the 458-residue chain is Glutamyl-tRNA reductase (458 aa).

Substrate contacts are provided by residues 49-52, Ser111, 116-118, and Gln122; these read TCNR and ETE. Cys50 serves as the catalytic Nucleophile. 191–196 lines the NADP(+) pocket; that stretch reads GAGKMS. Basic and acidic residues-rich tracts occupy residues 426 to 440 and 448 to 458; these read IPKD…KEVE and ERGHHESDFHN. The tract at residues 426 to 458 is disordered; it reads IPKDGEEHSSSKEVESVTQSSTERGHHESDFHN.

The protein belongs to the glutamyl-tRNA reductase family. In terms of assembly, homodimer.

It catalyses the reaction (S)-4-amino-5-oxopentanoate + tRNA(Glu) + NADP(+) = L-glutamyl-tRNA(Glu) + NADPH + H(+). Its pathway is porphyrin-containing compound metabolism; protoporphyrin-IX biosynthesis; 5-aminolevulinate from L-glutamyl-tRNA(Glu): step 1/2. Its function is as follows. Catalyzes the NADPH-dependent reduction of glutamyl-tRNA(Glu) to glutamate 1-semialdehyde (GSA). In Natranaerobius thermophilus (strain ATCC BAA-1301 / DSM 18059 / JW/NM-WN-LF), this protein is Glutamyl-tRNA reductase.